Consider the following 482-residue polypeptide: Aspartyl/glutamyl-tRNA(Asn/Gln) amidotransferase subunit B (482 aa).

This sequence belongs to the GatB/GatE family. GatB subfamily. In terms of assembly, heterotrimer of A, B and C subunits.

The enzyme catalyses L-glutamyl-tRNA(Gln) + L-glutamine + ATP + H2O = L-glutaminyl-tRNA(Gln) + L-glutamate + ADP + phosphate + H(+). It carries out the reaction L-aspartyl-tRNA(Asn) + L-glutamine + ATP + H2O = L-asparaginyl-tRNA(Asn) + L-glutamate + ADP + phosphate + 2 H(+). Functionally, allows the formation of correctly charged Asn-tRNA(Asn) or Gln-tRNA(Gln) through the transamidation of misacylated Asp-tRNA(Asn) or Glu-tRNA(Gln) in organisms which lack either or both of asparaginyl-tRNA or glutaminyl-tRNA synthetases. The reaction takes place in the presence of glutamine and ATP through an activated phospho-Asp-tRNA(Asn) or phospho-Glu-tRNA(Gln). This chain is Aspartyl/glutamyl-tRNA(Asn/Gln) amidotransferase subunit B, found in Thermotoga sp. (strain RQ2).